A 252-amino-acid chain; its full sequence is Imidazole glycerol phosphate synthase subunit HisF (252 aa).

Residues aspartate 11 and aspartate 130 contribute to the active site.

It belongs to the HisA/HisF family. In terms of assembly, heterodimer of HisH and HisF.

The protein resides in the cytoplasm. The enzyme catalyses 5-[(5-phospho-1-deoxy-D-ribulos-1-ylimino)methylamino]-1-(5-phospho-beta-D-ribosyl)imidazole-4-carboxamide + L-glutamine = D-erythro-1-(imidazol-4-yl)glycerol 3-phosphate + 5-amino-1-(5-phospho-beta-D-ribosyl)imidazole-4-carboxamide + L-glutamate + H(+). The protein operates within amino-acid biosynthesis; L-histidine biosynthesis; L-histidine from 5-phospho-alpha-D-ribose 1-diphosphate: step 5/9. Functionally, IGPS catalyzes the conversion of PRFAR and glutamine to IGP, AICAR and glutamate. The HisF subunit catalyzes the cyclization activity that produces IGP and AICAR from PRFAR using the ammonia provided by the HisH subunit. In Bacillus velezensis (strain DSM 23117 / BGSC 10A6 / LMG 26770 / FZB42) (Bacillus amyloliquefaciens subsp. plantarum), this protein is Imidazole glycerol phosphate synthase subunit HisF.